Consider the following 75-residue polypeptide: MAFLKKSLFLVLFLGMVSLSICEEEKRENEDEEEQEDDEQSEEKRALWKTLLKGAGKVFGHVAKQFLGSQGQPES.

An N-terminal signal peptide occupies residues 1-22 (MAFLKKSLFLVLFLGMVSLSIC). Residues 23–45 (EEEKRENEDEEEQEDDEQSEEKR) constitute a propeptide that is removed on maturation. Residues 25-44 (EKRENEDEEEQEDDEQSEEK) are disordered. Positions 30–41 (EDEEEQEDDEQS) are enriched in acidic residues.

Belongs to the frog skin active peptide (FSAP) family. Dermaseptin subfamily. In terms of tissue distribution, expressed by the skin glands.

It is found in the secreted. It localises to the target cell membrane. Antimicrobial peptide with activity against Gram-positive and Gram-negative bacteria, and fungi. Has hemolytic activity. The protein is Dermaseptin-S11 of Phyllomedusa sauvagei (Sauvage's leaf frog).